Here is a 259-residue protein sequence, read N- to C-terminus: Imidazole glycerol phosphate synthase subunit HisF (259 aa).

Residues D11 and D130 contribute to the active site.

The protein belongs to the HisA/HisF family. Heterodimer of HisH and HisF.

It is found in the cytoplasm. It catalyses the reaction 5-[(5-phospho-1-deoxy-D-ribulos-1-ylimino)methylamino]-1-(5-phospho-beta-D-ribosyl)imidazole-4-carboxamide + L-glutamine = D-erythro-1-(imidazol-4-yl)glycerol 3-phosphate + 5-amino-1-(5-phospho-beta-D-ribosyl)imidazole-4-carboxamide + L-glutamate + H(+). It functions in the pathway amino-acid biosynthesis; L-histidine biosynthesis; L-histidine from 5-phospho-alpha-D-ribose 1-diphosphate: step 5/9. Functionally, IGPS catalyzes the conversion of PRFAR and glutamine to IGP, AICAR and glutamate. The HisF subunit catalyzes the cyclization activity that produces IGP and AICAR from PRFAR using the ammonia provided by the HisH subunit. This chain is Imidazole glycerol phosphate synthase subunit HisF, found in Nitratidesulfovibrio vulgaris (strain DP4) (Desulfovibrio vulgaris).